Here is a 156-residue protein sequence, read N- to C-terminus: 6,7-dimethyl-8-ribityllumazine synthase (156 aa).

Residues Phe-23, 57–59 (AFE), and 81–83 (TVI) contribute to the 5-amino-6-(D-ribitylamino)uracil site. 86 to 87 (ST) lines the (2S)-2-hydroxy-3-oxobutyl phosphate pocket. His-89 acts as the Proton donor in catalysis. Residue Phe-114 participates in 5-amino-6-(D-ribitylamino)uracil binding. Arg-128 contributes to the (2S)-2-hydroxy-3-oxobutyl phosphate binding site.

Belongs to the DMRL synthase family. As to quaternary structure, forms an icosahedral capsid composed of 60 subunits, arranged as a dodecamer of pentamers.

The enzyme catalyses (2S)-2-hydroxy-3-oxobutyl phosphate + 5-amino-6-(D-ribitylamino)uracil = 6,7-dimethyl-8-(1-D-ribityl)lumazine + phosphate + 2 H2O + H(+). Its pathway is cofactor biosynthesis; riboflavin biosynthesis; riboflavin from 2-hydroxy-3-oxobutyl phosphate and 5-amino-6-(D-ribitylamino)uracil: step 1/2. Functionally, catalyzes the formation of 6,7-dimethyl-8-ribityllumazine by condensation of 5-amino-6-(D-ribitylamino)uracil with 3,4-dihydroxy-2-butanone 4-phosphate. This is the penultimate step in the biosynthesis of riboflavin. The sequence is that of 6,7-dimethyl-8-ribityllumazine synthase from Halalkalibacterium halodurans (strain ATCC BAA-125 / DSM 18197 / FERM 7344 / JCM 9153 / C-125) (Bacillus halodurans).